Here is a 395-residue protein sequence, read N- to C-terminus: MAKKTIRDIDWSGKRALVRVDFNVPLENGQITDDTRIRAALPTIRYLLEHGAAVILMSHLGRPKNKVVESMRLAPVVARLAELLPEAKAIKGTQATTGPAAEAAAQDLKPGEVLVLENTRFDPREEANDESMARELAKLGDVYVNDAFGSAHRAHASTEGVARFLPAVAGFLMEAELAALQGALENPTRPFVTIIGGAKISDKIGVIENLLGKVDALLIGGGMANTFLLAQGYEMGDSLVEPDSVPVAKDLLEKAASRGVRFMLPTDVVIADAFSADANRRVVSVGDIPPGWRVLDIGPETVRAYTEIITTAQTVIWNGPMGVFELAPFAEGTRAIAQAMANCPGMTIVGGGDSVAAVEQMGLADKIRHISTGGGASLELLEGRILPGVAALNDA.

Substrate is bound by residues D21–N23, R36, H59–R62, R120, and R153. ATP is bound by residues K203, E325, and G351–S354.

Belongs to the phosphoglycerate kinase family. Monomer.

The protein localises to the cytoplasm. The catalysed reaction is (2R)-3-phosphoglycerate + ATP = (2R)-3-phospho-glyceroyl phosphate + ADP. It participates in carbohydrate degradation; glycolysis; pyruvate from D-glyceraldehyde 3-phosphate: step 2/5. This is Phosphoglycerate kinase from Roseiflexus sp. (strain RS-1).